The primary structure comprises 224 residues: uncharacterized protein (224 aa).

The next 4 membrane-spanning stretches (helical) occupy residues 25 to 45 (ALAW…IYGI), 56 to 76 (VFLI…VILP), 107 to 127 (ELFL…YFFV), and 149 to 169 (IFVK…VVYF).

Its subcellular location is the cell membrane. This is an uncharacterized protein from Mycoplasma pneumoniae (strain ATCC 29342 / M129 / Subtype 1) (Mycoplasmoides pneumoniae).